The sequence spans 349 residues: MALLDICNLNIEIQTSNGRIKIVDGVNLSLNEGEISGLVGESGSGKSLIAKVICNAIKENWIITADRFRFHDVELLKLSPNKRRKLVGKEISMIFQNPLSCLDPSRKIGKQLIQNIPNWTFKNKWWKWFGWKKRRAIELLHRVGIKDHRDIMASYPNELTEGEGQKVMIAMAVANQPRLLIADEPTNALESTTALQVFRLLSSMNQNQGTTILLTSNDIKSISEWCDQISVLYCGQNTESAPTEILIESPHHPYTQALINAVPDFTQPLGFKTKLGTLEGTAPILEQMPIGCRLGPRCPFAQKKCMEKPRRLKIKQHEFSCHYPINLREKNFKEKTTATPFILNCKGNE.

An ABC transporter domain is found at 1-259 (MALLDICNLN…PHHPYTQALI (259 aa)). 40 to 47 (GESGSGKS) is a binding site for ATP.

This sequence belongs to the ABC transporter superfamily.

It is found in the cell inner membrane. Its function is as follows. Involved in a peptide intake transport system that plays a role in the resistance to antimicrobial peptides. The polypeptide is Peptide transport system ATP-binding protein SapD (sapD) (Haemophilus influenzae (strain ATCC 51907 / DSM 11121 / KW20 / Rd)).